We begin with the raw amino-acid sequence, 130 residues long: Small ribosomal subunit protein uS8 (130 aa).

Belongs to the universal ribosomal protein uS8 family. Part of the 30S ribosomal subunit. Contacts proteins S5 and S12.

Its function is as follows. One of the primary rRNA binding proteins, it binds directly to 16S rRNA central domain where it helps coordinate assembly of the platform of the 30S subunit. The sequence is that of Small ribosomal subunit protein uS8 from Salmonella arizonae (strain ATCC BAA-731 / CDC346-86 / RSK2980).